We begin with the raw amino-acid sequence, 311 residues long: Small ribosomal subunit biogenesis GTPase RsgA (311 aa).

A CP-type G domain is found at 77–239 (LSKQSHIIAT…IIDTPGIKGF (163 aa)). GTP is bound by residues 126-129 (NKTD) and 180-188 (GHSGVGKST). Zn(2+) is bound by residues cysteine 263, cysteine 268, histidine 270, and cysteine 276.

The protein belongs to the TRAFAC class YlqF/YawG GTPase family. RsgA subfamily. In terms of assembly, monomer. Associates with 30S ribosomal subunit, binds 16S rRNA. The cofactor is Zn(2+).

It is found in the cytoplasm. One of several proteins that assist in the late maturation steps of the functional core of the 30S ribosomal subunit. Helps release RbfA from mature subunits. May play a role in the assembly of ribosomal proteins into the subunit. Circularly permuted GTPase that catalyzes slow GTP hydrolysis, GTPase activity is stimulated by the 30S ribosomal subunit. The chain is Small ribosomal subunit biogenesis GTPase RsgA from Azobacteroides pseudotrichonymphae genomovar. CFP2.